An 873-amino-acid polypeptide reads, in one-letter code: Nonsense-mediated mRNA decay factor SMG8 (873 aa).

A disordered region spans residues 531-604 (AKKMAQREDE…ESMASKTERE (74 aa)). Over residues 540–550 (ELAEEDTDLDI) the composition is skewed to acidic residues. 2 stretches are compositionally biased toward low complexity: residues 551-562 (PESLLDPDSTSP) and 574-583 (SSSESSSQES). Residues 591 to 604 (SRRDESMASKTERE) are compositionally biased toward basic and acidic residues.

Belongs to the SMG8 family.

In terms of biological role, involved in nonsense-mediated decay (NMD) of mRNAs containing premature stop codons. Probable component of kinase complex containing smg-1 and recruited to stalled ribosomes. The protein is Nonsense-mediated mRNA decay factor SMG8 (smg-8) of Caenorhabditis elegans.